Consider the following 246-residue polypeptide: Putative pectinesterase 57 (246 aa).

Residues N127 and N143 are each glycosylated (N-linked (GlcNAc...) asparagine). T152 serves as a coordination point for substrate. N-linked (GlcNAc...) asparagine glycosylation occurs at N174. The Proton donor role is filled by D205. Catalysis depends on D226, which acts as the Nucleophile.

It belongs to the pectinesterase family.

The catalysed reaction is [(1-&gt;4)-alpha-D-galacturonosyl methyl ester](n) + n H2O = [(1-&gt;4)-alpha-D-galacturonosyl](n) + n methanol + n H(+). It functions in the pathway glycan metabolism; pectin degradation; 2-dehydro-3-deoxy-D-gluconate from pectin: step 1/5. Its function is as follows. Acts in the modification of cell walls via demethylesterification of cell wall pectin. This chain is Putative pectinesterase 57 (PME57), found in Arabidopsis thaliana (Mouse-ear cress).